A 68-amino-acid chain; its full sequence is Phosphatidylinositol N-acetylglucosaminyltransferase ERI1 subunit (68 aa).

2 helical membrane passes run 8–28 and 34–54; these read FLVL…FYWL and FLHY…WALI.

In terms of assembly, component of the phosphatidylinositol N-acetylglucosaminyltransferase (GPI-GlcNAc transferase) complex composed of at least GPI1, GPI2, GPI3, GPI15, GPI19 and ERI1. Interacts with GPI2. Interacts with GTP-bound RAS2 in an effector loop-dependent manner.

Its subcellular location is the endoplasmic reticulum membrane. The protein operates within glycolipid biosynthesis; glycosylphosphatidylinositol-anchor biosynthesis. Functionally, probable component of the GPI-GlcNAc transferase (GPI-GnT) complex in the endoplasmic reticulum, a complex that catalyzes transfer of GlcNAc from UDP-GlcNAc to an acceptor phosphatidylinositol, the first step in the production of GPI-anchors for cell surface proteins. Ras may inhibit the enzyme activity of the GPI-GnT complex via the association between ERI1 and RAS2. The sequence is that of Phosphatidylinositol N-acetylglucosaminyltransferase ERI1 subunit (ERI1) from Saccharomyces cerevisiae (strain ATCC 204508 / S288c) (Baker's yeast).